Consider the following 72-residue polypeptide: MMAKATMAFCFLLMLTTVMLPTEGKTIAGRTDCEQHTDCSAASGPVYCCQDSDCCGGVDYICTNYGQCVRHF.

A signal peptide spans methionine 1–proline 21. The propeptide occupies threonine 22 to arginine 30.

It belongs to the teretoxin H (TH) superfamily. Contains 4 disulfide bonds. Expressed by the venom duct.

The protein resides in the secreted. In Terebra subulata (Chocolate spotted auger), this protein is Teretoxin Tsu11.2.